The sequence spans 60 residues: Arabinogalactan protein 14 (60 aa).

Residues 1 to 28 (MEAMKMKLYVVVLVAVIAFSTVHQTVAA) form the signal peptide. 4-hydroxyproline occurs at positions 32, 34, and 36. O-linked (Ara...) hydroxyproline glycans are attached at residues Pro-32, Pro-34, and Pro-36. Ser-38 carries GPI-anchor amidated serine lipidation. A propeptide spans 39–60 (DASSFIPTFFASVAVMAFGFFF) (removed in mature form).

Belongs to the AG-peptide AGP family. Contains 4-hydroxyproline; hydroxylated on Pro-32, Pro-34 and Pro-36. In terms of processing, O-glycosylated on hydroxyprolines; noncontiguous hydroxylproline residues are glycosylated with arabinogalactan.

Its subcellular location is the cell membrane. Its function is as follows. Proteoglycan that seems to be implicated in diverse developmental roles such as differentiation, cell-cell recognition, embryogenesis and programmed cell death. Involved in the regulation of root hair elongation. The chain is Arabinogalactan protein 14 from Arabidopsis thaliana (Mouse-ear cress).